The primary structure comprises 299 residues: ATP phosphoribosyltransferase (299 aa).

It belongs to the ATP phosphoribosyltransferase family. Long subfamily. It depends on Mg(2+) as a cofactor.

The protein resides in the cytoplasm. It catalyses the reaction 1-(5-phospho-beta-D-ribosyl)-ATP + diphosphate = 5-phospho-alpha-D-ribose 1-diphosphate + ATP. It participates in amino-acid biosynthesis; L-histidine biosynthesis; L-histidine from 5-phospho-alpha-D-ribose 1-diphosphate: step 1/9. Its activity is regulated as follows. Feedback inhibited by histidine. Its function is as follows. Catalyzes the condensation of ATP and 5-phosphoribose 1-diphosphate to form N'-(5'-phosphoribosyl)-ATP (PR-ATP). Has a crucial role in the pathway because the rate of histidine biosynthesis seems to be controlled primarily by regulation of HisG enzymatic activity. This is ATP phosphoribosyltransferase from Shewanella sediminis (strain HAW-EB3).